A 184-amino-acid polypeptide reads, in one-letter code: Large ribosomal subunit protein uL6 (184 aa).

It belongs to the universal ribosomal protein uL6 family. As to quaternary structure, part of the 50S ribosomal subunit.

Its function is as follows. This protein binds to the 23S rRNA, and is important in its secondary structure. It is located near the subunit interface in the base of the L7/L12 stalk, and near the tRNA binding site of the peptidyltransferase center. This is Large ribosomal subunit protein uL6 from Thermococcus onnurineus (strain NA1).